Reading from the N-terminus, the 192-residue chain is Small ribosomal subunit protein uS5 (192 aa).

One can recognise an S5 DRBM domain in the interval 20–83; that stretch reads FVDKLVHINR…EAAKRGLIRV (64 aa). Residues 162 to 192 form a disordered region; sequence SVAARRGLKVSALQARRRDADPADTSEAAVA.

The protein belongs to the universal ribosomal protein uS5 family. Part of the 30S ribosomal subunit. Contacts proteins S4 and S8.

Functionally, with S4 and S12 plays an important role in translational accuracy. Located at the back of the 30S subunit body where it stabilizes the conformation of the head with respect to the body. The polypeptide is Small ribosomal subunit protein uS5 (Methylorubrum extorquens (strain CM4 / NCIMB 13688) (Methylobacterium extorquens)).